The sequence spans 445 residues: Ribosome biogenesis protein YTM1 (445 aa).

The segment at 8 to 89 (VKVKFFTREQ…EAVLNVEYTR (82 aa)) is ubiquitin-like (UBL) domain. A sufficient for interaction with ERB1 and association with 66S pre-ribosomes region spans residues 99–445 (SFSNEDWVSA…FNKGDNIFKN (347 aa)). WD repeat units follow at residues 101–138 (SNED…EKQY), 140–178 (GHTG…VKHV), 195–232 (GHQA…MTAV), 270–310 (SHKA…CVDT), 312–351 (STSY…SAKI), 358–398 (GHKN…SIYT), and 409–445 (GIND…IFKN).

The protein belongs to the WD repeat WDR12/YTM1 family. In terms of assembly, component of the NOP7 complex, composed of ERB1, NOP7 and YTM1. The complex is held together by ERB1, which interacts with NOP7 via its N-terminal domain and with YTM1 via a high-affinity interaction between the seven-bladed beta-propeller domains of the 2 proteins. The NOP7 complex associates with the 66S pre-ribosome. Interacts (via UBL domain) with MDN1 (via VWFA/MIDAS domain).

It is found in the nucleus. It localises to the nucleolus. The protein resides in the nucleoplasm. In terms of biological role, component of the NOP7 complex, which is required for maturation of the 25S and 5.8S ribosomal RNAs and formation of the 60S ribosome. The sequence is that of Ribosome biogenesis protein YTM1 from Eremothecium gossypii (strain ATCC 10895 / CBS 109.51 / FGSC 9923 / NRRL Y-1056) (Yeast).